A 557-amino-acid polypeptide reads, in one-letter code: Dihydroxy-acid dehydratase (557 aa).

Aspartate 78 provides a ligand contact to Mg(2+). Cysteine 119 lines the [2Fe-2S] cluster pocket. Mg(2+) is bound by residues aspartate 120 and lysine 121. Lysine 121 carries the N6-carboxylysine modification. Cysteine 192 contacts [2Fe-2S] cluster. Glutamate 442 contacts Mg(2+). Residue serine 468 is the Proton acceptor of the active site.

The protein belongs to the IlvD/Edd family. In terms of assembly, homodimer. [2Fe-2S] cluster serves as cofactor. It depends on Mg(2+) as a cofactor.

The enzyme catalyses (2R)-2,3-dihydroxy-3-methylbutanoate = 3-methyl-2-oxobutanoate + H2O. It carries out the reaction (2R,3R)-2,3-dihydroxy-3-methylpentanoate = (S)-3-methyl-2-oxopentanoate + H2O. The protein operates within amino-acid biosynthesis; L-isoleucine biosynthesis; L-isoleucine from 2-oxobutanoate: step 3/4. It participates in amino-acid biosynthesis; L-valine biosynthesis; L-valine from pyruvate: step 3/4. Functions in the biosynthesis of branched-chain amino acids. Catalyzes the dehydration of (2R,3R)-2,3-dihydroxy-3-methylpentanoate (2,3-dihydroxy-3-methylvalerate) into 2-oxo-3-methylpentanoate (2-oxo-3-methylvalerate) and of (2R)-2,3-dihydroxy-3-methylbutanoate (2,3-dihydroxyisovalerate) into 2-oxo-3-methylbutanoate (2-oxoisovalerate), the penultimate precursor to L-isoleucine and L-valine, respectively. This Bacillus mycoides (strain KBAB4) (Bacillus weihenstephanensis) protein is Dihydroxy-acid dehydratase.